Here is a 785-residue protein sequence, read N- to C-terminus: Endonuclease MutS2 (785 aa).

335-342 (GPNTGGKT) provides a ligand contact to ATP. A Smr domain is found at 710–785 (LDLRGERYEE…GLGNTVVELR (76 aa)). Residues 764-785 (VKSARDGGANEGGLGNTVVELR) form a disordered region.

It belongs to the DNA mismatch repair MutS family. MutS2 subfamily. As to quaternary structure, homodimer. Binds to stalled ribosomes, contacting rRNA.

In terms of biological role, endonuclease that is involved in the suppression of homologous recombination and thus may have a key role in the control of bacterial genetic diversity. Functionally, acts as a ribosome collision sensor, splitting the ribosome into its 2 subunits. Detects stalled/collided 70S ribosomes which it binds and splits by an ATP-hydrolysis driven conformational change. Acts upstream of the ribosome quality control system (RQC), a ribosome-associated complex that mediates the extraction of incompletely synthesized nascent chains from stalled ribosomes and their subsequent degradation. Probably generates substrates for RQC. The chain is Endonuclease MutS2 from Halalkalibacterium halodurans (strain ATCC BAA-125 / DSM 18197 / FERM 7344 / JCM 9153 / C-125) (Bacillus halodurans).